The following is a 264-amino-acid chain: Acetylglutamate kinase (264 aa).

Residues 50–51 (GG), Arg-72, and Asn-164 contribute to the substrate site.

This sequence belongs to the acetylglutamate kinase family. ArgB subfamily.

It localises to the cytoplasm. It carries out the reaction N-acetyl-L-glutamate + ATP = N-acetyl-L-glutamyl 5-phosphate + ADP. Its pathway is amino-acid biosynthesis; L-arginine biosynthesis; N(2)-acetyl-L-ornithine from L-glutamate: step 2/4. Catalyzes the ATP-dependent phosphorylation of N-acetyl-L-glutamate. In Moritella profunda, this protein is Acetylglutamate kinase.